An 89-amino-acid polypeptide reads, in one-letter code: Small ribosomal subunit protein uS15 (89 aa).

Belongs to the universal ribosomal protein uS15 family. Part of the 30S ribosomal subunit. Forms a bridge to the 50S subunit in the 70S ribosome, contacting the 23S rRNA.

Functionally, one of the primary rRNA binding proteins, it binds directly to 16S rRNA where it helps nucleate assembly of the platform of the 30S subunit by binding and bridging several RNA helices of the 16S rRNA. Its function is as follows. Forms an intersubunit bridge (bridge B4) with the 23S rRNA of the 50S subunit in the ribosome. This chain is Small ribosomal subunit protein uS15, found in Bacillus pumilus (strain SAFR-032).